The primary structure comprises 146 residues: Bifunctional adenosine 5'-phosphosulfate phosphorylase/adenylylsulfatase HINT4 (146 aa).

Positions 9 to 120 constitute an HIT domain; it reads IFCEIVRNPT…YVPRWKAIKY (112 aa). Residues 101-105 carry the Histidine triad motif motif; sequence HLHLH. The Tele-AMP-histidine intermediate role is filled by H105.

In terms of assembly, homodimer.

The protein localises to the peroxisome. It catalyses the reaction sulfate + ADP + H(+) = adenosine 5'-phosphosulfate + phosphate. The catalysed reaction is adenosine 5'-phosphosulfate + H2O = sulfate + AMP + 2 H(+). The adenosine 5'-phosphosulfate phosphorylase activity is enhanced at low pH. Functionally, possesses adenylylsulfatase activity in vitro, releasing AMP and sulfate from adenylyl sulfate. Also possesses adenosine 5'-phosphosulfate (APS) phosphorylase activity in vitro. Catalyzes the phosphorolysis of APS, leading to ADP and sulfate. This is Bifunctional adenosine 5'-phosphosulfate phosphorylase/adenylylsulfatase HINT4 from Arabidopsis thaliana (Mouse-ear cress).